A 313-amino-acid chain; its full sequence is MMIINNQIHYPVLLKEVIENLITTKDGIYLDLTIGFGGHSYNIIKILDQKARLIGFDQDLKAIAHCNQLFSEFNNVSLINDNFVNLKKHLQLMQIDNIDGCLIDLGVSSYQLDQADRGFSYHSLGRLDMRMDQNKAVDATKLIQNSTVSELVKIMKNYGEIKDPYRVVVALKKAFEKKELNTLEVVELIKKHVNKAELYANKHPARRYFQALRIAVNNELEVLEKLLSYLPSYLNKGGKIAIITFHSLEEKIVKKVFRHLASISSLNNLPINNELLKKYHNHFNKGLSPTQSELETNRRSRSAKLFVLEKINN.

Residues 37–39 (GGH), Asp57, Phe83, Asp104, and Gln111 each bind S-adenosyl-L-methionine.

This sequence belongs to the methyltransferase superfamily. RsmH family.

Its subcellular location is the cytoplasm. It catalyses the reaction cytidine(1402) in 16S rRNA + S-adenosyl-L-methionine = N(4)-methylcytidine(1402) in 16S rRNA + S-adenosyl-L-homocysteine + H(+). In terms of biological role, specifically methylates the N4 position of cytidine in position 1402 (C1402) of 16S rRNA. This Mycoplasmoides gallisepticum (strain R(low / passage 15 / clone 2)) (Mycoplasma gallisepticum) protein is Ribosomal RNA small subunit methyltransferase H.